Consider the following 103-residue polypeptide: V-type ATP synthase subunit F (103 aa).

Belongs to the V-ATPase F subunit family.

Produces ATP from ADP in the presence of a proton gradient across the membrane. The sequence is that of V-type ATP synthase subunit F from Clostridium botulinum (strain Alaska E43 / Type E3).